The sequence spans 313 residues: tRNA dimethylallyltransferase (313 aa).

Residue 17-24 (GPTASGKT) coordinates ATP. 19 to 24 (TASGKT) is a substrate binding site. 3 interaction with substrate tRNA regions span residues 42 to 45 (DSAL), 166 to 170 (QRLSR), and 247 to 252 (RCVGYR).

This sequence belongs to the IPP transferase family. Monomer. Mg(2+) is required as a cofactor.

The catalysed reaction is adenosine(37) in tRNA + dimethylallyl diphosphate = N(6)-dimethylallyladenosine(37) in tRNA + diphosphate. Its function is as follows. Catalyzes the transfer of a dimethylallyl group onto the adenine at position 37 in tRNAs that read codons beginning with uridine, leading to the formation of N6-(dimethylallyl)adenosine (i(6)A). The sequence is that of tRNA dimethylallyltransferase from Serratia proteamaculans (strain 568).